The primary structure comprises 235 residues: MRPSGRNNDQLRTLKVTHNFTKHAEGSVLIEFGDTKVLCTASVVAGVPRFKKDSGEGWLTAEYGMLPRSTHTRMDREAARGKQSGRTQEIQRLIGRALRASVDLTKIGENTIKVDCDVIQADGGTRTASITGASLAIRDAIDYMKQNGMLDEQTSPLMSQVAAISVGIFNNEPVLDLDYDEDSNAETDMNVVMNSNGGMIEIQGTAEGKDFSEEEFAKMLGLAKKGIKEIFESIF.

Phosphate contacts are provided by residues arginine 86 and 124–126 (GTR).

The protein belongs to the RNase PH family. As to quaternary structure, homohexameric ring arranged as a trimer of dimers.

It carries out the reaction tRNA(n+1) + phosphate = tRNA(n) + a ribonucleoside 5'-diphosphate. Phosphorolytic 3'-5' exoribonuclease that plays an important role in tRNA 3'-end maturation. Removes nucleotide residues following the 3'-CCA terminus of tRNAs; can also add nucleotides to the ends of RNA molecules by using nucleoside diphosphates as substrates, but this may not be physiologically important. Probably plays a role in initiation of 16S rRNA degradation (leading to ribosome degradation) during starvation. The sequence is that of Ribonuclease PH from Francisella philomiragia subsp. philomiragia (strain ATCC 25017 / CCUG 19701 / FSC 153 / O#319-036).